The sequence spans 152 residues: Erythema protein SVEP (152 aa).

The signal sequence occupies residues 1-18; it reads MSITQSFFVLTLAIFGAA.

As to expression, salivary gland (at protein level).

The protein localises to the secreted. Its function is as follows. Salivary vasoactive peptide; induces vasodilatation in bioassay with rabbit aortic rings. This is Erythema protein SVEP from Simulium vittatum (Striped black fly).